Consider the following 122-residue polypeptide: Holo-[acyl-carrier-protein] synthase (122 aa).

Residues Asp-8 and Glu-56 each coordinate Mg(2+).

It belongs to the P-Pant transferase superfamily. AcpS family. Mg(2+) is required as a cofactor.

The protein localises to the cytoplasm. The catalysed reaction is apo-[ACP] + CoA = holo-[ACP] + adenosine 3',5'-bisphosphate + H(+). Its function is as follows. Transfers the 4'-phosphopantetheine moiety from coenzyme A to a Ser of acyl-carrier-protein. This chain is Holo-[acyl-carrier-protein] synthase, found in Alkaliphilus oremlandii (strain OhILAs) (Clostridium oremlandii (strain OhILAs)).